An 859-amino-acid chain; its full sequence is Ribose import ATP-binding protein RbsA 1 (859 aa).

Positions 1-351 (MRASLENGDD…AARAPDEASE (351 aa)) are disordered. Residues 1 to 353 (MRASLENGDD…RAPDEASEEA (353 aa)) are unknown. Residues 8 to 17 (GDDHDAHRLV) are compositionally biased toward basic and acidic residues. Basic residues predominate over residues 28–43 (RAARRRAFARARRGER). Composition is skewed to basic and acidic residues over residues 44–80 (RARG…DRRA), 89–129 (RREQ…EEGG), and 137–167 (RERE…EGDR). A compositionally biased stretch (basic residues) spans 168-179 (RRRRSRDPRRHP). 5 stretches are compositionally biased toward basic and acidic residues: residues 193-214 (GARE…GARE), 239-250 (RLDGRAVRDRGV), 263-281 (AGGD…RDVR), 288-301 (DSPR…EEVG), and 308-323 (DSGR…REDV). 2 consecutive ABC transporter domains span residues 358 to 594 (LALT…VGRR) and 607 to 851 (RDAA…TSDV). 390–397 (GENGAGKS) provides a ligand contact to ATP.

The protein belongs to the ABC transporter superfamily. Ribose importer (TC 3.A.1.2.1) family. As to quaternary structure, the complex is composed of an ATP-binding protein (RbsA), two transmembrane proteins (RbsC) and a solute-binding protein (RbsB).

It is found in the cell inner membrane. The catalysed reaction is D-ribose(out) + ATP + H2O = D-ribose(in) + ADP + phosphate + H(+). Its function is as follows. Part of the ABC transporter complex RbsABC involved in ribose import. Responsible for energy coupling to the transport system. The sequence is that of Ribose import ATP-binding protein RbsA 1 from Burkholderia pseudomallei (strain 1710b).